A 210-amino-acid chain; its full sequence is Proteasome subunit beta 2 (210 aa).

The propeptide at 1–12 (MSNNVEEKILHG) is removed in mature form; by autocatalysis. The active-site Nucleophile is the threonine 13.

This sequence belongs to the peptidase T1B family. In terms of assembly, the 20S proteasome core is composed of 14 alpha and 14 beta subunits that assemble into four stacked heptameric rings, resulting in a barrel-shaped structure. The two inner rings, each composed of seven catalytic beta subunits, are sandwiched by two outer rings, each composed of seven alpha subunits. The catalytic chamber with the active sites is on the inside of the barrel. Has a gated structure, the ends of the cylinder being occluded by the N-termini of the alpha-subunits. Is capped at one or both ends by the proteasome regulatory ATPase, PAN.

It is found in the cytoplasm. It catalyses the reaction Cleavage of peptide bonds with very broad specificity.. The formation of the proteasomal ATPase PAN-20S proteasome complex, via the docking of the C-termini of PAN into the intersubunit pockets in the alpha-rings, triggers opening of the gate for substrate entry. Interconversion between the open-gate and close-gate conformations leads to a dynamic regulation of the 20S proteasome proteolysis activity. Component of the proteasome core, a large protease complex with broad specificity involved in protein degradation. The chain is Proteasome subunit beta 2 from Cenarchaeum symbiosum (strain A).